A 284-amino-acid chain; its full sequence is Bifunctional protein FolD (284 aa).

Residues 166–168 and S191 each bind NADP(+); that span reads GRS.

This sequence belongs to the tetrahydrofolate dehydrogenase/cyclohydrolase family. In terms of assembly, homodimer.

It carries out the reaction (6R)-5,10-methylene-5,6,7,8-tetrahydrofolate + NADP(+) = (6R)-5,10-methenyltetrahydrofolate + NADPH. The enzyme catalyses (6R)-5,10-methenyltetrahydrofolate + H2O = (6R)-10-formyltetrahydrofolate + H(+). Its pathway is one-carbon metabolism; tetrahydrofolate interconversion. Its function is as follows. Catalyzes the oxidation of 5,10-methylenetetrahydrofolate to 5,10-methenyltetrahydrofolate and then the hydrolysis of 5,10-methenyltetrahydrofolate to 10-formyltetrahydrofolate. The chain is Bifunctional protein FolD from Delftia acidovorans (strain DSM 14801 / SPH-1).